The primary structure comprises 319 residues: Thioredoxin reductase (319 aa).

FAD contacts are provided by residues 11-14 (SGPA), 40-41 (IA), glutamine 45, asparagine 54, valine 87, cysteine 145, aspartate 288, and 295-297 (RQA). The cysteines at positions 142 and 145 are disulfide-linked.

It belongs to the class-II pyridine nucleotide-disulfide oxidoreductase family. Homodimer. The cofactor is FAD.

It is found in the cytoplasm. It carries out the reaction [thioredoxin]-dithiol + NADP(+) = [thioredoxin]-disulfide + NADPH + H(+). The sequence is that of Thioredoxin reductase (TRR1) from Yarrowia lipolytica (strain CLIB 122 / E 150) (Yeast).